The following is a 75-amino-acid chain: Mitochondrial import receptor subunit TOM7-1 (75 aa).

Met1 is subject to N-acetylmethionine. Residues 1-28 are disordered; sequence MESTISLKVNKGKGKGSKGASSSDDKSK. Topologically, residues 1–46 are cytoplasmic; sequence MESTISLKVNKGKGKGSKGASSSDDKSKFDVVKEWTNWSLKKAKVV. The helical transmembrane segment at 47–64 threads the bilayer; that stretch reads THYGFIPLVIFVGMNSDP. Topologically, residues 65–75 are mitochondrial intermembrane; sequence KPHLFQLLSPV.

Belongs to the Tom7 family. In terms of assembly, forms part of the preprotein translocase complex of the outer mitochondrial membrane (TOM complex) which consists of at least 6 different proteins (TOM5, TOM6, TOM7, TOM20, TOM22/TOM9 and TOM40). Expressed in roots, flowers, young cotyledons and leaves.

Its subcellular location is the mitochondrion outer membrane. Its function is as follows. Seems to act as a modulator of the dynamics of the mitochondrial protein transport machinery. Seems to promote the dissociation of subunits of the outer membrane translocase. This is Mitochondrial import receptor subunit TOM7-1 (TOM7-1) from Arabidopsis thaliana (Mouse-ear cress).